Consider the following 113-residue polypeptide: MTISAQVIDTIVEWIDDNLNQPLRIDDIARHAGYSKWHLQRLFMQYKGESLGRYVRERKLKLAARDLLDTDQKVYDICLKYGFDSQQTFTRIFTRTFNLPPGAYRKEKHGRTH.

The 99-residue stretch at D9 to E107 folds into the HTH araC/xylS-type domain. 2 DNA-binding regions (H-T-H motif) span residues D26–K47 and V74–F97.

Functionally, transcriptional regulator. Binds to regulatory regions of target genes, including efflux pump operon acrAB and outer membrane protein gene tolC. Represses transcription of genes belonging to the flagellar regulon, including flhD, flhB and fliC; probably thereby leading to repression of motility. Represses expression of the flhDC operon in a post-transcriptional manner. Activates expression of acrAB, perhaps thereby conferring multidrug resistance. Involved in indole- and bile-mediated regulation of acrAB; binding of bile to RamA may contribute to activation of expression of acrAB. Plays a role in regulating virulence in mice. The chain is Transcriptional regulator RamA from Salmonella typhimurium (strain LT2 / SGSC1412 / ATCC 700720).